The sequence spans 295 residues: Protoheme IX farnesyltransferase (295 aa).

Transmembrane regions (helical) follow at residues 27-46 (IMYL…PGSI), 50-72 (IAII…NMWY), 93-115 (ISKS…VMMI), 119-136 (YISG…SFAY), 148-168 (IVIG…SVTS), 175-195 (LILF…LSLL), 219-239 (VHIL…GLFL), 244-264 (LYEI…FKVF), and 275-295 (MFTY…LASF).

Belongs to the UbiA prenyltransferase family. Protoheme IX farnesyltransferase subfamily.

Its subcellular location is the cell inner membrane. The catalysed reaction is heme b + (2E,6E)-farnesyl diphosphate + H2O = Fe(II)-heme o + diphosphate. It participates in porphyrin-containing compound metabolism; heme O biosynthesis; heme O from protoheme: step 1/1. Converts heme B (protoheme IX) to heme O by substitution of the vinyl group on carbon 2 of heme B porphyrin ring with a hydroxyethyl farnesyl side group. The chain is Protoheme IX farnesyltransferase from Ehrlichia canis (strain Jake).